A 445-amino-acid polypeptide reads, in one-letter code: Proline--tRNA ligase (445 aa).

The protein belongs to the class-II aminoacyl-tRNA synthetase family. ProS type 2 subfamily. Homodimer.

Its subcellular location is the cytoplasm. The catalysed reaction is tRNA(Pro) + L-proline + ATP = L-prolyl-tRNA(Pro) + AMP + diphosphate. Functionally, catalyzes the attachment of proline to tRNA(Pro) in a two-step reaction: proline is first activated by ATP to form Pro-AMP and then transferred to the acceptor end of tRNA(Pro). The chain is Proline--tRNA ligase from Caulobacter sp. (strain K31).